A 182-amino-acid chain; its full sequence is uncharacterized protein (182 aa).

This sequence belongs to the DNA 3' phosphatase family.

This is an uncharacterized protein from Autographa californica nuclear polyhedrosis virus (AcMNPV).